The primary structure comprises 353 residues: Nicotinate-nucleotide--dimethylbenzimidazole phosphoribosyltransferase (353 aa).

Catalysis depends on E318, which acts as the Proton acceptor.

Belongs to the CobT family.

It carries out the reaction 5,6-dimethylbenzimidazole + nicotinate beta-D-ribonucleotide = alpha-ribazole 5'-phosphate + nicotinate + H(+). Its pathway is nucleoside biosynthesis; alpha-ribazole biosynthesis; alpha-ribazole from 5,6-dimethylbenzimidazole: step 1/2. Functionally, catalyzes the synthesis of alpha-ribazole-5'-phosphate from nicotinate mononucleotide (NAMN) and 5,6-dimethylbenzimidazole (DMB). This is Nicotinate-nucleotide--dimethylbenzimidazole phosphoribosyltransferase from Roseiflexus sp. (strain RS-1).